We begin with the raw amino-acid sequence, 386 residues long: Benzoyl-CoA reductase subunit C (386 aa).

It belongs to the FldB/FldC dehydratase alpha/beta subunit family. Heterotetramer composed of A, B, C, and D subunits. Requires iron-sulfur cluster as cofactor. An oxidized flavin is required as a cofactor.

The catalysed reaction is cyclohexa-1,5-diene-1-carbonyl-CoA + oxidized 2[4Fe-4S]-[ferredoxin] + 2 ADP + 2 phosphate = reduced 2[4Fe-4S]-[ferredoxin] + benzoyl-CoA + 2 ATP + 2 H2O. It catalyses the reaction 3-hydroxybenzoyl-CoA + AH2 + 2 ATP + 2 H2O = 3-hydroxycyclohexa-1,5-diene-1-carbonyl-CoA + A + 2 ADP + 2 phosphate + 2 H(+). Catalyzes the anaerobic reduction of benzoyl-CoA and 3-hydroxybenzoyl-CoA to form cyclohexa-1,5-diene-1-carbonyl-CoA and 3-hydroxycyclohexa-1,5-diene-1-carbonyl-CoA, respectively. The enzyme also reduces other benzoyl-CoA analogs with small substituents at the aromatic ring. This Thauera aromatica protein is Benzoyl-CoA reductase subunit C (bcrC).